Here is a 455-residue protein sequence, read N- to C-terminus: Venom prothrombin activator nigrarin-D (455 aa).

The N-terminal stretch at 1 to 20 (MAPPLLLCLILTFLWNLPEA) is a signal peptide. The propeptide occupies 21-40 (ESNVFLKSKVANRFLQRTKR). A Gla domain is found at 41-86 (SNSIFEEFKAGNIERECIEEKCSKEEAREVFEDNEKTETFWNVYVD). 11 positions are modified to 4-carboxyglutamate: Glu46, Glu47, Glu54, Glu56, Glu59, Glu60, Glu65, Glu66, Glu69, Glu72, and Glu75. A disulfide bridge connects residues Cys57 and Cys62. The 37-residue stretch at 86–122 (DGDQCSSNPCHYRGTCKDGIGSYTCTCLPNYEGKNCE) folds into the EGF-like 1; calcium-binding domain. 11 disulfides stabilise this stretch: Cys90-Cys101, Cys95-Cys110, Cys112-Cys121, Cys129-Cys140, Cys136-Cys149, Cys151-Cys164, Cys172-Cys328, Cys216-Cys221, Cys236-Cys252, Cys376-Cys390, and Cys401-Cys429. Ser92 carries O-linked (Hex...) serine glycosylation. The EGF-like 2 domain maps to 129 to 164 (CRVFNGNCWHFCKSVQNEIQCSCAESYRLGDDGHSC). Positions 182 to 209 (REASLPDFVQSQKAILLKKSDNPSPDIR) are cleaved as a propeptide — activation peptide. The 244-residue stretch at 210 to 453 (IINGMDCKLG…FIPWIKAIMS (244 aa)) folds into the Peptidase S1 domain. The Charge relay system role is filled by His251. N-linked (GlcNAc...) asparagine glycosylation occurs at Asn254. The Charge relay system role is filled by Asp308. Ser405 serves as the catalytic Charge relay system.

It belongs to the peptidase S1 family. Snake venom subfamily. In terms of assembly, heterodimer of a light chain and a heavy chain; disulfide-linked. Post-translationally, the vitamin K-dependent, enzymatic carboxylation of some glutamate residues allows the modified protein to bind calcium. In terms of tissue distribution, expressed by the venom gland.

The protein resides in the secreted. It catalyses the reaction Selective cleavage of Arg-|-Thr and then Arg-|-Ile bonds in prothrombin to form thrombin.. Snake prothrombin activator that attacks the hemostatic system of prey. This protein is functionally similar to blood coagulation factor Xa. In Cryptophis nigrescens (Eastern small-eyed snake), this protein is Venom prothrombin activator nigrarin-D.